Here is a 244-residue protein sequence, read N- to C-terminus: Protein DMP9 (244 aa).

The segment at Met-1–Arg-56 is disordered. The segment covering Pro-18–Ser-29 has biased composition (pro residues). Residues Pro-30 to Ala-45 are compositionally biased toward low complexity. Helical transmembrane passes span Met-71–Ile-91, Gly-99–Phe-119, Leu-173–Phe-193, and Val-213–Pro-233.

It belongs to the plant DMP1 protein family. As to expression, restricted to flowers and pollen.

The protein localises to the endoplasmic reticulum membrane. It is found in the vacuole membrane. Its function is as follows. Involved in membrane remodeling. In Arabidopsis thaliana (Mouse-ear cress), this protein is Protein DMP9.